Here is a 997-residue protein sequence, read N- to C-terminus: Signal peptide, CUB and EGF-like domain-containing protein 2 (997 aa).

The signal sequence occupies residues Met-1 to Ala-28. Positions Asp-43–Glu-83 constitute an EGF-like 1; calcium-binding domain. Disulfide bonds link Cys-47-Cys-60, Cys-54-Cys-69, Cys-71-Cys-82, Cys-88-Cys-100, Cys-96-Cys-109, Cys-111-Cys-124, Cys-130-Cys-141, and Cys-137-Cys-150. Positions Asp-84–Leu-125 constitute an EGF-like 2; calcium-binding domain. One can recognise an EGF-like 3; calcium-binding domain in the interval Asp-126–Gln-162. EGF-like domains follow at residues Cys-175 to Cys-211, Cys-215 to Cys-250, and Cys-284 to Cys-319. The EGF-like 7; calcium-binding domain occupies Asp-321–Gln-361. Disulfide bonds link Cys-325/Cys-336, Cys-332/Cys-345, Cys-347/Cys-360, Cys-366/Cys-376, Cys-372/Cys-385, Cys-387/Cys-399, Cys-405/Cys-416, Cys-412/Cys-425, and Cys-427/Cys-440. The 39-residue stretch at Asp-362–Gly-400 folds into the EGF-like 8; calcium-binding domain. Residues Asp-401–Val-441 enclose the EGF-like 9; calcium-binding domain. An N-linked (GlcNAc...) asparagine glycan is attached at Asn-657. Residues Cys-807 and Cys-833 are joined by a disulfide bond. A CUB domain is found at Cys-807–Tyr-919. Residues Ile-845–Leu-854 are interaction with the cholesterol-anchor of SHH. The cysteines at positions 860 and 881 are disulfide-linked.

Interacts with SHH via the cholesterol anchor of the dually lipid-modified SHH (ShhNp). Interacts with PTCH1. Forms homooligomers and heterooligomers with SCUBE1 and SCUBE3. Interacts with VEGFR2. Post-translationally, N-glycosylated. Expressed in adult heart, lung and testis.

Its subcellular location is the secreted. It localises to the cell surface. In terms of biological role, lipid-binding protein required for SHH long-range signaling by binding to the dually lipid-modified SHH (ShhNp) and by promoting ShhNp mobilization, solubilization and release from the cell membrane. Acts by enhancing the proteolytic processing (shedding) of the lipid-modified N- and C- terminal of ShhNp at the cell surface. Synergizes with DISP1 to cause an increase in SHH secretion. Probable cell surface coreceptor for VEGFR2 involved in VEGFR2-mediated angiogenesis. The chain is Signal peptide, CUB and EGF-like domain-containing protein 2 from Mus musculus (Mouse).